The following is a 605-amino-acid chain: Pescadillo homolog (605 aa).

In terms of domain architecture, BRCT spans 346 to 440; sequence PVATLFSEFV…ELVPANLYLP (95 aa). The disordered stretch occupies residues 449–553; sequence SPWGDSTGYD…RKATEEEEEK (105 aa). Residues 461–508 show a composition bias toward acidic residues; sequence AENDEDVEGSDAEEIDESADEDAESEEVEEDDTAAVALNEDDEDDEDE. The segment covering 526-537 has biased composition (basic and acidic residues); it reads EAKDVIDSESSD. Positions 533–605 form a coiled coil; the sequence is SESSDKKKKK…KAKLAKLDKK (73 aa).

It belongs to the pescadillo family. Component of the NOP7 complex, composed of ERB1, NOP7 and YTM1. The complex is held together by ERB1, which interacts with NOP7 via its N-terminal domain and with YTM1 via a high-affinity interaction between the seven-bladed beta-propeller domains of the 2 proteins. The NOP7 complex associates with the 66S pre-ribosome.

It is found in the nucleus. It localises to the nucleolus. Its subcellular location is the nucleoplasm. Functionally, component of the NOP7 complex, which is required for maturation of the 25S and 5.8S ribosomal RNAs and formation of the 60S ribosome. The protein is Pescadillo homolog of Kluyveromyces lactis (strain ATCC 8585 / CBS 2359 / DSM 70799 / NBRC 1267 / NRRL Y-1140 / WM37) (Yeast).